Reading from the N-terminus, the 385-residue chain is Eukaryotic translation initiation factor 3 subunit M (385 aa).

The PCI domain maps to N180 to H342.

This sequence belongs to the eIF-3 subunit M family. Component of the eukaryotic translation initiation factor 3 (eIF-3) complex.

It is found in the cytoplasm. In terms of biological role, component of the eukaryotic translation initiation factor 3 (eIF-3) complex, which is involved in protein synthesis of a specialized repertoire of mRNAs and, together with other initiation factors, stimulates binding of mRNA and methionyl-tRNAi to the 40S ribosome. The eIF-3 complex specifically targets and initiates translation of a subset of mRNAs involved in cell proliferation. The protein is Eukaryotic translation initiation factor 3 subunit M of Anopheles gambiae (African malaria mosquito).